Here is a 60-residue protein sequence, read N- to C-terminus: Photosystem II reaction center protein L (60 aa).

Residues S39–F59 form a helical membrane-spanning segment.

The protein belongs to the PsbL family. PSII is composed of 1 copy each of membrane proteins PsbA, PsbB, PsbC, PsbD, PsbE, PsbF, PsbH, PsbI, PsbJ, PsbK, PsbL, PsbM, PsbT, PsbX, PsbY, PsbZ, Psb30/Ycf12, at least 3 peripheral proteins of the oxygen-evolving complex and a large number of cofactors. It forms dimeric complexes.

It is found in the plastid. The protein resides in the chloroplast thylakoid membrane. In terms of biological role, one of the components of the core complex of photosystem II (PSII). PSII is a light-driven water:plastoquinone oxidoreductase that uses light energy to abstract electrons from H(2)O, generating O(2) and a proton gradient subsequently used for ATP formation. It consists of a core antenna complex that captures photons, and an electron transfer chain that converts photonic excitation into a charge separation. This subunit is found at the monomer-monomer interface and is required for correct PSII assembly and/or dimerization. This is Photosystem II reaction center protein L from Oedogonium cardiacum (Filamentous green alga).